We begin with the raw amino-acid sequence, 570 residues long: Interleukin-1 receptor accessory protein (570 aa).

The signal sequence occupies residues 1–20 (MTLLWCVVSLYFYGILQSDA). Ig-like C2-type domains lie at 21-128 (SERC…VAFP), 141-230 (PMKL…RTLT), and 242-348 (PPVI…AKVK). Topologically, residues 21–367 (SERCDDWGLD…VELACGFGAT (347 aa)) are extracellular. Cystine bridges form between Cys24–Cys122, Cys47–Cys114, Cys137–Cys181, Cys160–Cys212, and Cys266–Cys332. The N-linked (GlcNAc...) asparagine glycan is linked to Asn57. The tract at residues 69–85 (IWYWTRQDRDLEEPINF) is essential for interaction with PTPRD. N-linked (GlcNAc...) asparagine glycosylation is found at Asn107, Asn111, and Asn118. N-linked (GlcNAc...) asparagine glycosylation is found at Asn196, Asn209, and Asn299. Residues 368–388 (VLLVVILIVVYHVYWLEMVLF) form a helical membrane-spanning segment. Over 389–570 (YRAHFGTDET…GLSYSSLKNV (182 aa)) the chain is Cytoplasmic. The TIR domain maps to 403–546 (KEYDIYVSYA…RFWKQLQVAM (144 aa)). The active site involves Glu482. Residues 549–570 (KKSPRRSSSDEQGLSYSSLKNV) form a disordered region. Ser557 carries the phosphoserine modification. The segment covering 558 to 570 (DEQGLSYSSLKNV) has biased composition (polar residues).

The protein belongs to the interleukin-1 receptor family. In terms of assembly, the interleukin-36 receptor complex is a heterodimer of IL1RL2 and IL1RAP; the association is inhibited by IL36RN. The interleukin-1 receptor complex is a heterodimer of IL1R1 and IL1RAP. Associates with IL1R2 to form a non-signaling interleukin-1 receptor complex. Isoform 4 interacts with IL1R1 in an interleukin-1-dependent manner. Interacts with IL-33-bound IL1RL1 to form the minimal interleukin-33 signaling complex with a 1:1:1 stoichiometry. Interacts with KIT (independently of stimulation with KITLG/SCF). A mast cell-specific KITLG/SCF-induced interleukin-33 signaling complex contains IL1RL1, IL1RAP, KIT and MYD88. Interacts (via the first immunoglobilin domain) with PTPRD (via the third immunoglobilin domain); induces pre- and postsynaptic differentiation of neurons. In terms of tissue distribution, detected in liver, skin, placenta, thymus and lung. Isoform 4 is predominantly expressed in brain. Overexpressed on candidate chronic myeloid leukemia (CML) stem cells, hematopoietic stem cells and mononuclear cells of patients with acute myeloid leukemia (AML). Overexpressed in patients with chronic obstructive pulmonary disease (COPD). Expressed in T-helper 1 (Th1) and T-helper 2 (Th2) cell subsets.

It is found in the cell membrane. It localises to the secreted. The enzyme catalyses NAD(+) + H2O = ADP-D-ribose + nicotinamide + H(+). Coreceptor for IL1RL2 in the IL-36 signaling system. Coreceptor with IL1R1 in the IL-1 signaling system. Associates with IL1R1 bound to IL1B to form the high affinity interleukin-1 receptor complex which mediates interleukin-1-dependent activation of NF-kappa-B and other pathways. Signaling involves the recruitment of adapter molecules such as TOLLIP, MYD88, and IRAK1 or IRAK2 via the respective TIR domains of the receptor/coreceptor subunits. Recruits TOLLIP to the signaling complex. Does not bind to interleukin-1 alone; binding of IL1RN to IL1R1, prevents its association with IL1R1 to form a signaling complex. The cellular response is modulated through a non-signaling association with the membrane IL1R2 decoy receptor. Coreceptor for IL1RL1 in the IL-33 signaling system. Can bidirectionally induce pre- and postsynaptic differentiation of neurons by trans-synaptically binding to PTPRD. May play a role in IL1B-mediated costimulation of IFNG production from T-helper 1 (Th1) cells. Functionally, associates with secreted ligand-bound IL1R2 and increases the affinity of secreted IL1R2 for IL1B; this complex formation may be the dominant mechanism for neutralization of IL1B by secreted/soluble receptors. Enhances the ability of secreted IL1R1 to inhibit IL-33 signaling. In terms of biological role, unable to mediate canonical IL-1 signaling. Required for Src phosphorylation by IL1B. May be involved in IL1B-potentiated NMDA-induced calcium influx in neurons. The sequence is that of Interleukin-1 receptor accessory protein (IL1RAP) from Homo sapiens (Human).